The sequence spans 86 residues: Apolipoprotein C-I (86 aa).

The N-terminal stretch at 1-26 (MRLFLSLPVLVVVLLMILEGPGPAQG) is a signal peptide.

The protein belongs to the apolipoprotein C1 family.

It localises to the secreted. Functionally, inhibitor of lipoprotein binding to the low density lipoprotein (LDL) receptor, LDL receptor-related protein, and very low density lipoprotein (VLDL) receptor. Associates with high density lipoproteins (HDL) and the triacylglycerol-rich lipoproteins in the plasma and makes up about 10% of the protein of the VLDL and 2% of that of HDL. Appears to interfere directly with fatty acid uptake and is also the major plasma inhibitor of cholesteryl ester transfer protein (CETP). Binds free fatty acids and reduces their intracellular esterification. Modulates the interaction of APOE with beta-migrating VLDL and inhibits binding of beta-VLDL to the LDL receptor-related protein. The chain is Apolipoprotein C-I (APOC1) from Saimiri boliviensis boliviensis (Bolivian squirrel monkey).